A 232-amino-acid polypeptide reads, in one-letter code: MKFQARVLTLYPEMFPGFLGCSLAGQALKQGIWSLETVQIRDFALDKHHSVDDTPAGGGAGMVMRADVLAAALDSCPNDSPRLLMSPRGRLLNQAYARSLARSSGVTLVCGRFEGVDERIIEARELEEVSIGDYILSGGETAALVLLDAIVRLLPGVMGNEISAKCESFENGLLEHPQYTRPAVFEGRGIPPVLTSGHHKAIANWRQQQAESLTRQRRPDLYALYNKNRQKT.

S-adenosyl-L-methionine contacts are provided by residues Gly-111 and Ile-131–Leu-136.

Belongs to the RNA methyltransferase TrmD family. In terms of assembly, homodimer.

The protein localises to the cytoplasm. The catalysed reaction is guanosine(37) in tRNA + S-adenosyl-L-methionine = N(1)-methylguanosine(37) in tRNA + S-adenosyl-L-homocysteine + H(+). Its function is as follows. Specifically methylates guanosine-37 in various tRNAs. The sequence is that of tRNA (guanine-N(1)-)-methyltransferase from Bartonella henselae (strain ATCC 49882 / DSM 28221 / CCUG 30454 / Houston 1) (Rochalimaea henselae).